Consider the following 337-residue polypeptide: 3-isopropylmalate dehydrogenase (337 aa).

4 residues coordinate substrate: Arg86, Arg96, Arg117, and Asp201. Asp201, Asp225, and Asp229 together coordinate Mg(2+). 258 to 270 provides a ligand contact to NAD(+); the sequence is GAAFDIAGKNIGN.

The protein belongs to the isocitrate and isopropylmalate dehydrogenases family. In terms of assembly, homotetramer. It depends on Mg(2+) as a cofactor. The cofactor is Mn(2+).

It localises to the cytoplasm. The catalysed reaction is (2R,3S)-3-isopropylmalate + NAD(+) = 4-methyl-2-oxopentanoate + CO2 + NADH. The protein operates within amino-acid biosynthesis; L-leucine biosynthesis; L-leucine from 3-methyl-2-oxobutanoate: step 3/4. Functionally, catalyzes the oxidation of 3-carboxy-2-hydroxy-4-methylpentanoate (3-isopropylmalate) to 3-carboxy-4-methyl-2-oxopentanoate. The product decarboxylates to 4-methyl-2 oxopentanoate. The polypeptide is 3-isopropylmalate dehydrogenase (leuB) (Sulfurisphaera tokodaii (strain DSM 16993 / JCM 10545 / NBRC 100140 / 7) (Sulfolobus tokodaii)).